A 231-amino-acid chain; its full sequence is Small ribosomal subunit protein uS3 (231 aa).

The KH type-2 domain occupies isoleucine 39–arginine 107.

The protein belongs to the universal ribosomal protein uS3 family. In terms of assembly, part of the 30S ribosomal subunit. Forms a tight complex with proteins S10 and S14.

Functionally, binds the lower part of the 30S subunit head. Binds mRNA in the 70S ribosome, positioning it for translation. This chain is Small ribosomal subunit protein uS3, found in Campylobacter hominis (strain ATCC BAA-381 / DSM 21671 / CCUG 45161 / LMG 19568 / NCTC 13146 / CH001A).